We begin with the raw amino-acid sequence, 607 residues long: UvrABC system protein C (607 aa).

Residues 16 to 94 (HLPGVYRHLD…IKSLRPRYNI (79 aa)) enclose the GIY-YIG domain. One can recognise a UVR domain in the interval 203 to 238 (REVMDEIEARMQQASGELRFEEAAVLRDQMGSLSKV).

Belongs to the UvrC family. Interacts with UvrB in an incision complex.

Its subcellular location is the cytoplasm. Functionally, the UvrABC repair system catalyzes the recognition and processing of DNA lesions. UvrC both incises the 5' and 3' sides of the lesion. The N-terminal half is responsible for the 3' incision and the C-terminal half is responsible for the 5' incision. The protein is UvrABC system protein C of Bordetella avium (strain 197N).